Reading from the N-terminus, the 156-residue chain is SsrA-binding protein (156 aa).

Residues 134–156 (RQTLREQQDKRESLRELRERNRR) form a disordered region.

Belongs to the SmpB family.

The protein localises to the cytoplasm. Functionally, required for rescue of stalled ribosomes mediated by trans-translation. Binds to transfer-messenger RNA (tmRNA), required for stable association of tmRNA with ribosomes. tmRNA and SmpB together mimic tRNA shape, replacing the anticodon stem-loop with SmpB. tmRNA is encoded by the ssrA gene; the 2 termini fold to resemble tRNA(Ala) and it encodes a 'tag peptide', a short internal open reading frame. During trans-translation Ala-aminoacylated tmRNA acts like a tRNA, entering the A-site of stalled ribosomes, displacing the stalled mRNA. The ribosome then switches to translate the ORF on the tmRNA; the nascent peptide is terminated with the 'tag peptide' encoded by the tmRNA and targeted for degradation. The ribosome is freed to recommence translation, which seems to be the essential function of trans-translation. This Paenarthrobacter aurescens (strain TC1) protein is SsrA-binding protein.